A 498-amino-acid chain; its full sequence is ATP synthase subunit beta, chloroplastic (498 aa).

172-179 lines the ATP pocket; the sequence is GGAGVGKT.

Belongs to the ATPase alpha/beta chains family. In terms of assembly, F-type ATPases have 2 components, CF(1) - the catalytic core - and CF(0) - the membrane proton channel. CF(1) has five subunits: alpha(3), beta(3), gamma(1), delta(1), epsilon(1). CF(0) has four main subunits: a(1), b(1), b'(1) and c(9-12).

It localises to the plastid. The protein localises to the chloroplast thylakoid membrane. It carries out the reaction ATP + H2O + 4 H(+)(in) = ADP + phosphate + 5 H(+)(out). Its function is as follows. Produces ATP from ADP in the presence of a proton gradient across the membrane. The catalytic sites are hosted primarily by the beta subunits. The sequence is that of ATP synthase subunit beta, chloroplastic from Pelargonium hortorum (Common geranium).